Consider the following 27-residue polypeptide: Augerpeptide hhe6.2 (27 aa).

3 disulfides stabilise this stretch: Cys-4-Cys-13, Cys-8-Cys-20, and Cys-12-Cys-27.

In terms of tissue distribution, expressed by the venom duct.

The protein resides in the secreted. In Hastula hectica (Sea snail), this protein is Augerpeptide hhe6.2.